We begin with the raw amino-acid sequence, 1070 residues long: Protocadherin-8 (1070 aa).

Residues 1-29 form the signal peptide; it reads MSPAKRWGSPCLFPLQLFSLCWVLSVAQS. Cadherin domains lie at 30–135, 136–245, 247–354, 393–497, 498–609, and 615–721; these read KTVR…APRF, PRAQ…SPAF, QGAV…APEI, QEAG…APIF, TKPV…SPIL, and ANGS…VPAS. The Extracellular segment spans residues 30 to 747; it reads KTVRYSTFEE…SGPSLQWDTP (718 aa). Residue Asn-616 is glycosylated (N-linked (GlcNAc...) asparagine). Positions 716-725 are enriched in low complexity; it reads SAVPASSGSP. The disordered stretch occupies residues 716 to 740; it reads SAVPASSGSPEHSRPPGSRLAPSGP. The helical transmembrane segment at 748-768 threads the bilayer; sequence LIVIIVLAGSCTLLLAAIIAI. The Cytoplasmic portion of the chain corresponds to 769-1070; the sequence is ATTCNRRKKE…SPKKGINENV (302 aa). 3 disordered regions span residues 777–859, 906–928, and 1046–1070; these read KEVR…TGES, REAEKFSGKDSGKGDSDFNDSDS, and IGVPLYESPPGSRYVSPKKGINENV. Basic and acidic residues-rich tracts occupy residues 780–790 and 906–921; these read RKGGALREERP and REAEKFSGKDSGKGDS. Phosphoserine is present on Ser-1053.

The N-terminal extracellular domain forms homophilic interactions; these interactions activate p38 MAPK via TAOK2 and trigger endocytosis. Interacts with CDH2; this interaction may lead to CDH2 cointernalization. Interacts with CDH11. Interacts with TAOK2.

The protein localises to the cell membrane. Its subcellular location is the cell projection. It is found in the dendrite. The protein resides in the presynaptic cell membrane. It localises to the postsynaptic cell membrane. Its function is as follows. Calcium-dependent cell-adhesion protein. May play a role in activity-induced synaptic reorganization underlying long term memory. Could be involved in CDH2 internalization through TAOK2/p38 MAPK pathway. In hippocampal neurons, may play a role in the down-regulation of dendritic spines, maybe through its action on CDH2 endocytosis. This chain is Protocadherin-8 (Pcdh8), found in Mus musculus (Mouse).